A 292-amino-acid polypeptide reads, in one-letter code: Acetylglutamate kinase (292 aa).

Substrate is bound by residues 64–65, arginine 86, and asparagine 190; that span reads GG.

This sequence belongs to the acetylglutamate kinase family. ArgB subfamily.

The protein localises to the cytoplasm. The catalysed reaction is N-acetyl-L-glutamate + ATP = N-acetyl-L-glutamyl 5-phosphate + ADP. It functions in the pathway amino-acid biosynthesis; L-arginine biosynthesis; N(2)-acetyl-L-ornithine from L-glutamate: step 2/4. Catalyzes the ATP-dependent phosphorylation of N-acetyl-L-glutamate. The chain is Acetylglutamate kinase from Geotalea uraniireducens (strain Rf4) (Geobacter uraniireducens).